Here is a 146-residue protein sequence, read N- to C-terminus: Ribonuclease H (146 aa).

Positions 4–145 (ELNKVVVYTD…ADMLARSQIV (142 aa)) constitute an RNase H type-1 domain. Positions 13, 51, 73, and 137 each coordinate Mg(2+).

The protein belongs to the RNase H family. As to quaternary structure, monomer. It depends on Mg(2+) as a cofactor.

It localises to the cytoplasm. The enzyme catalyses Endonucleolytic cleavage to 5'-phosphomonoester.. Functionally, endonuclease that specifically degrades the RNA of RNA-DNA hybrids. The protein is Ribonuclease H of Ehrlichia ruminantium (strain Gardel).